Reading from the N-terminus, the 233-residue chain is ATP-dependent Clp protease proteolytic subunit 1 (233 aa).

Residue S136 is the Nucleophile of the active site. Residue H161 is part of the active site.

The protein belongs to the peptidase S14 family. In terms of assembly, fourteen ClpP subunits assemble into 2 heptameric rings which stack back to back to give a disk-like structure with a central cavity, resembling the structure of eukaryotic proteasomes.

The protein localises to the cytoplasm. The enzyme catalyses Hydrolysis of proteins to small peptides in the presence of ATP and magnesium. alpha-casein is the usual test substrate. In the absence of ATP, only oligopeptides shorter than five residues are hydrolyzed (such as succinyl-Leu-Tyr-|-NHMec, and Leu-Tyr-Leu-|-Tyr-Trp, in which cleavage of the -Tyr-|-Leu- and -Tyr-|-Trp bonds also occurs).. Its function is as follows. Cleaves peptides in various proteins in a process that requires ATP hydrolysis. Has a chymotrypsin-like activity. Plays a major role in the degradation of misfolded proteins. This chain is ATP-dependent Clp protease proteolytic subunit 1, found in Bifidobacterium longum (strain NCC 2705).